We begin with the raw amino-acid sequence, 136 residues long: Transcription antitermination protein NusB (136 aa).

It belongs to the NusB family.

Its function is as follows. Involved in transcription antitermination. Required for transcription of ribosomal RNA (rRNA) genes. Binds specifically to the boxA antiterminator sequence of the ribosomal RNA (rrn) operons. This chain is Transcription antitermination protein NusB, found in Pseudoalteromonas translucida (strain TAC 125).